The sequence spans 462 residues: Bindin (462 aa).

A signal peptide spans 1–19 (MARQLSVILVALTLTTALA). Residues 20-244 (ENFPTRTSAP…DSGRSARKKR (225 aa)) constitute a propeptide that is removed on maturation. 2 disordered regions span residues 155 to 194 (DDRR…APKD) and 221 to 278 (RTRR…QGMG). The fucose-binding domain stretch occupies residues 372–380 (LRHLRHHSN).

Belongs to the bindin family.

It localises to the cytoplasmic vesicle. Its subcellular location is the secretory vesicle. The protein localises to the acrosome lumen. Species-specific sea urchin sperm protein required for adhesion of sperm to the egg surface during fertilization. Bindin coats the acrosomal process after it is externalized by the acrosome reaction. It binds to sulfated, fucose-containing polysaccharides on the vitelline layer receptor proteoglycans which cover the egg plasma membrane. This is Bindin from Lytechinus variegatus (Green sea urchin).